The primary structure comprises 212 residues: Prolactin (212 aa).

A signal peptide spans 1 to 24 (MAHRETNGSKLFITVLCMVAACSA). Intrachain disulfides connect cysteine 70-cysteine 185 and cysteine 202-cysteine 212.

Belongs to the somatotropin/prolactin family.

Its subcellular location is the secreted. This Sparus aurata (Gilthead sea bream) protein is Prolactin (prl).